Here is a 446-residue protein sequence, read N- to C-terminus: Chromosomal replication initiator protein DnaA (446 aa).

A domain I, interacts with DnaA modulators region spans residues 1–92 (MENISDLWNS…SQAEEEIDLP (92 aa)). The tract at residues 93–109 (PSKPNAAQDDSNHLPQS) is domain II. The interval 110-326 (MLNPKYTFDT…GALIRVVAYS (217 aa)) is domain III, AAA+ region. 4 residues coordinate ATP: Gly154, Gly156, Lys157, and Thr158. A domain IV, binds dsDNA region spans residues 327 to 446 (SLINKDINAD…QVEEINDILK (120 aa)).

The protein belongs to the DnaA family. In terms of assembly, oligomerizes as a right-handed, spiral filament on DNA at oriC.

The protein resides in the cytoplasm. Functionally, plays an essential role in the initiation and regulation of chromosomal replication. ATP-DnaA binds to the origin of replication (oriC) to initiate formation of the DNA replication initiation complex once per cell cycle. Binds the DnaA box (a 9 base pair repeat at the origin) and separates the double-stranded (ds)DNA. Forms a right-handed helical filament on oriC DNA; dsDNA binds to the exterior of the filament while single-stranded (ss)DNA is stabiized in the filament's interior. The ATP-DnaA-oriC complex binds and stabilizes one strand of the AT-rich DNA unwinding element (DUE), permitting loading of DNA polymerase. After initiation quickly degrades to an ADP-DnaA complex that is not apt for DNA replication. Binds acidic phospholipids. In Bacillus cereus (strain 03BB102), this protein is Chromosomal replication initiator protein DnaA.